Here is a 196-residue protein sequence, read N- to C-terminus: Agamous-like MADS-box protein AGL70 (196 aa).

Residues 1–61 (MGRRKVEIKR…GKLYDSASGD (61 aa)) enclose the MADS-box domain. The Nuclear localization signal motif lies at 8–15 (IKRIENKS). The 91-residue stretch at 80-170 (ALDLAEKIRN…ASQVGKKTFL (91 aa)) folds into the K-box domain.

In terms of tissue distribution, mostly expressed in roots, leaves and flowers, and, to a lower extent, in inflorescence, siliques, pollen and shoots.

It is found in the nucleus. Functionally, probable transcription factor involved in the negative regulation of flowering time, probably through the photoperiodic and vernalization pathways; more efficient in cv. Landsberg erecta than in cv. Columbia background. Prevents premature flowering. Involved in the modulation of vernalization impact on flowering according to genotype acclimation to altitude. The protein is Agamous-like MADS-box protein AGL70 of Arabidopsis thaliana (Mouse-ear cress).